The chain runs to 339 residues: Anthranilate phosphoribosyltransferase (339 aa).

5-phospho-alpha-D-ribose 1-diphosphate contacts are provided by residues Gly-79, 82–83 (GD), Ser-87, 89–92 (NIST), 107–115 (KHGNRSISS), and Ser-119. Anthranilate is bound at residue Gly-79. Ser-91 contacts Mg(2+). Residue Asn-110 participates in anthranilate binding. Arg-165 lines the anthranilate pocket. Positions 224 and 225 each coordinate Mg(2+).

Belongs to the anthranilate phosphoribosyltransferase family. In terms of assembly, homodimer. Mg(2+) is required as a cofactor.

It carries out the reaction N-(5-phospho-beta-D-ribosyl)anthranilate + diphosphate = 5-phospho-alpha-D-ribose 1-diphosphate + anthranilate. Its pathway is amino-acid biosynthesis; L-tryptophan biosynthesis; L-tryptophan from chorismate: step 2/5. Its function is as follows. Catalyzes the transfer of the phosphoribosyl group of 5-phosphorylribose-1-pyrophosphate (PRPP) to anthranilate to yield N-(5'-phosphoribosyl)-anthranilate (PRA). The polypeptide is Anthranilate phosphoribosyltransferase (Listeria innocua serovar 6a (strain ATCC BAA-680 / CLIP 11262)).